A 316-amino-acid polypeptide reads, in one-letter code: tRNA dimethylallyltransferase (316 aa).

Position 17 to 24 (glycine 17 to threonine 24) interacts with ATP. Substrate is bound at residue threonine 19–threonine 24. Interaction with substrate tRNA stretches follow at residues aspartate 42 to leucine 45, glutamine 166 to arginine 170, arginine 247 to arginine 252, and lysine 280 to arginine 287.

The protein belongs to the IPP transferase family. As to quaternary structure, monomer. Mg(2+) is required as a cofactor.

The catalysed reaction is adenosine(37) in tRNA + dimethylallyl diphosphate = N(6)-dimethylallyladenosine(37) in tRNA + diphosphate. In terms of biological role, catalyzes the transfer of a dimethylallyl group onto the adenine at position 37 in tRNAs that read codons beginning with uridine, leading to the formation of N6-(dimethylallyl)adenosine (i(6)A). This is tRNA dimethylallyltransferase from Escherichia coli O157:H7.